A 146-amino-acid chain; its full sequence is Large ribosomal subunit protein uL15 (146 aa).

The tract at residues 1–51 (MQLNTLKPAEGSKKNRRRVGRGIGSGLGKTAGRGHKGQKSRSGGFHKVGFE) is disordered. Gly residues predominate over residues 21–31 (RGIGSGLGKTA).

The protein belongs to the universal ribosomal protein uL15 family. Part of the 50S ribosomal subunit.

In terms of biological role, binds to the 23S rRNA. This Polynucleobacter asymbioticus (strain DSM 18221 / CIP 109841 / QLW-P1DMWA-1) (Polynucleobacter necessarius subsp. asymbioticus) protein is Large ribosomal subunit protein uL15.